A 98-amino-acid chain; its full sequence is uncharacterized protein (98 aa).

The protein resides in the cytoplasm. This is an uncharacterized protein from Saccharomyces cerevisiae (strain ATCC 204508 / S288c) (Baker's yeast).